A 102-amino-acid polypeptide reads, in one-letter code: Large ribosomal subunit protein uL24 (102 aa).

The protein belongs to the universal ribosomal protein uL24 family. In terms of assembly, part of the 50S ribosomal subunit.

Its function is as follows. One of two assembly initiator proteins, it binds directly to the 5'-end of the 23S rRNA, where it nucleates assembly of the 50S subunit. In terms of biological role, one of the proteins that surrounds the polypeptide exit tunnel on the outside of the subunit. The sequence is that of Large ribosomal subunit protein uL24 from Cupriavidus metallidurans (strain ATCC 43123 / DSM 2839 / NBRC 102507 / CH34) (Ralstonia metallidurans).